The following is a 394-amino-acid chain: Penicillopepsin-3 (394 aa).

The N-terminal stretch at 1 to 20 is a signal peptide; the sequence is MVSFTQLQLAFLGLSALGAA. The propeptide at 21–70 is activation peptide; that stretch reads VPVTGTSEKKTFSLNQVKVAGTKTKNPAEHYANALRKYGAEVPSHVLAAA. Residues 87–392 form the Peptidase A1 domain; that stretch reads YLTPIDVGGT…DASGPRLGFA (306 aa). Active-site residues include D103 and D284. A disulfide bond links C320 and C355.

Belongs to the peptidase A1 family. As to quaternary structure, monomer.

It localises to the secreted. The catalysed reaction is Hydrolysis of proteins with broad specificity similar to that of pepsin A, preferring hydrophobic residues at P1 and P1', but also cleaving 20-Gly-|-Glu-21 in the B chain of insulin. Clots milk, and activates trypsinogen.. Functionally, secreted aspartic endopeptidase that allows assimilation of proteinaceous substrates. The scissile peptide bond is attacked by a nucleophilic water molecule activated by two aspartic residues in the active site. Shows a broad primary substrate specificity. Favors hydrophobic residues at the P1 and P1' positions, but can also activate trypsinogen and hydrolyze the B chain of insulin between positions 'Gly-20' and 'Glu-21'. The sequence is that of Penicillopepsin-3 from Penicillium janthinellum (Penicillium vitale).